Consider the following 232-residue polypeptide: Small ribosomal subunit protein uS3 (232 aa).

The KH type-2 domain maps to 39 to 107; it reads VRQFLTKELQ…PAQINIAEVR (69 aa). The segment at 213-232 is disordered; it reads AANAVEPKGDKPKKQRKGRK.

This sequence belongs to the universal ribosomal protein uS3 family. In terms of assembly, part of the 30S ribosomal subunit. Forms a tight complex with proteins S10 and S14.

Its function is as follows. Binds the lower part of the 30S subunit head. Binds mRNA in the 70S ribosome, positioning it for translation. This Vibrio campbellii (strain ATCC BAA-1116) protein is Small ribosomal subunit protein uS3.